The sequence spans 169 residues: NADH-quinone oxidoreductase subunit B (169 aa).

Residues C42, C43, C107, and C136 each coordinate [4Fe-4S] cluster.

Belongs to the complex I 20 kDa subunit family. In terms of assembly, NDH-1 is composed of 14 different subunits. Subunits NuoB, C, D, E, F, and G constitute the peripheral sector of the complex. [4Fe-4S] cluster serves as cofactor.

Its subcellular location is the cell inner membrane. It catalyses the reaction a quinone + NADH + 5 H(+)(in) = a quinol + NAD(+) + 4 H(+)(out). In terms of biological role, NDH-1 shuttles electrons from NADH, via FMN and iron-sulfur (Fe-S) centers, to quinones in the respiratory chain. The immediate electron acceptor for the enzyme in this species is believed to be ubiquinone. Couples the redox reaction to proton translocation (for every two electrons transferred, four hydrogen ions are translocated across the cytoplasmic membrane), and thus conserves the redox energy in a proton gradient. In Sulfurimonas denitrificans (strain ATCC 33889 / DSM 1251) (Thiomicrospira denitrificans (strain ATCC 33889 / DSM 1251)), this protein is NADH-quinone oxidoreductase subunit B.